The sequence spans 261 residues: 3-methyl-2-oxobutanoate hydroxymethyltransferase (261 aa).

Mg(2+) is bound by residues Asp44 and Asp83. 3-methyl-2-oxobutanoate contacts are provided by residues 44-45 (DS), Asp83, and Lys112. Residue Glu114 participates in Mg(2+) binding. Glu181 functions as the Proton acceptor in the catalytic mechanism.

Belongs to the PanB family. In terms of assembly, homodecamer; pentamer of dimers. The cofactor is Mg(2+).

It localises to the cytoplasm. The catalysed reaction is 3-methyl-2-oxobutanoate + (6R)-5,10-methylene-5,6,7,8-tetrahydrofolate + H2O = 2-dehydropantoate + (6S)-5,6,7,8-tetrahydrofolate. It participates in cofactor biosynthesis; (R)-pantothenate biosynthesis; (R)-pantoate from 3-methyl-2-oxobutanoate: step 1/2. Catalyzes the reversible reaction in which hydroxymethyl group from 5,10-methylenetetrahydrofolate is transferred onto alpha-ketoisovalerate to form ketopantoate. The chain is 3-methyl-2-oxobutanoate hydroxymethyltransferase from Acidithiobacillus ferrooxidans (strain ATCC 23270 / DSM 14882 / CIP 104768 / NCIMB 8455) (Ferrobacillus ferrooxidans (strain ATCC 23270)).